The sequence spans 290 residues: 4-diphosphocytidyl-2-C-methyl-D-erythritol kinase (290 aa).

Lys14 is an active-site residue. 103–113 lines the ATP pocket; it reads PMGGGLGGGSS. Residue Asp145 is part of the active site.

It belongs to the GHMP kinase family. IspE subfamily. Homodimer.

It catalyses the reaction 4-CDP-2-C-methyl-D-erythritol + ATP = 4-CDP-2-C-methyl-D-erythritol 2-phosphate + ADP + H(+). It participates in isoprenoid biosynthesis; isopentenyl diphosphate biosynthesis via DXP pathway; isopentenyl diphosphate from 1-deoxy-D-xylulose 5-phosphate: step 3/6. Catalyzes the phosphorylation of the position 2 hydroxy group of 4-diphosphocytidyl-2C-methyl-D-erythritol. The sequence is that of 4-diphosphocytidyl-2-C-methyl-D-erythritol kinase from Pectobacterium atrosepticum (strain SCRI 1043 / ATCC BAA-672) (Erwinia carotovora subsp. atroseptica).